We begin with the raw amino-acid sequence, 366 residues long: S-adenosylmethionine:tRNA ribosyltransferase-isomerase (366 aa).

Belongs to the QueA family. In terms of assembly, monomer.

Its subcellular location is the cytoplasm. It carries out the reaction 7-aminomethyl-7-carbaguanosine(34) in tRNA + S-adenosyl-L-methionine = epoxyqueuosine(34) in tRNA + adenine + L-methionine + 2 H(+). It functions in the pathway tRNA modification; tRNA-queuosine biosynthesis. Transfers and isomerizes the ribose moiety from AdoMet to the 7-aminomethyl group of 7-deazaguanine (preQ1-tRNA) to give epoxyqueuosine (oQ-tRNA). The protein is S-adenosylmethionine:tRNA ribosyltransferase-isomerase of Parasynechococcus marenigrum (strain WH8102).